A 403-amino-acid polypeptide reads, in one-letter code: SH3 and cysteine-rich domain-containing protein (403 aa).

Residues 1–51 (MIPPSGAREDSGDGLTGEATGTEQPPSPASTSSLESKLQKLKRSLSFKTKS) are disordered. Polar residues predominate over residues 19–36 (ATGTEQPPSPASTSSLES). Over residues 39–51 (QKLKRSLSFKTKS) the composition is skewed to basic residues. Residues 108–160 (LHAFQEHVFKKPTFCDVCNHMIVGTHAKHGLRCGACKMSIHHKCADGLAPQRC) form a Phorbol-ester/DAG-type zinc finger. The interval 212–264 (QRTKKGGSGSGSDSPPRTSTSELVDVPEEADGPGDGSDMRTRSNSVFTYPENG) is disordered. The segment covering 222 to 232 (GSDSPPRTSTS) has biased composition (low complexity). SH3 domains follow at residues 286–345 (LQMN…RVEE) and 348–403 (KIYR…LVDV).

As to quaternary structure, interacts (via SH3 domains) with CACNA1S. Interacts with CACNA1H. Interacts with CACNA1C. As to expression, expressed predominantly in brain Detected in brain neurons, more specifically in hippocampus, cerebellum and inferior olive. Highly expressed in urinary bladder, and detected at lower levels in adrenal gland. Detected at very low levels in heart, liver, lung and kidney.

Its subcellular location is the cytoplasm. It is found in the cytosol. It localises to the cell membrane. The protein localises to the sarcolemma. Its function is as follows. Promotes expression of the ion channel CACNA1H at the cell membrane, and thereby contributes to the regulation of channel activity. Plays a minor and redundant role in promoting the expression of calcium channel CACNA1S at the cell membrane, and thereby contributes to increased channel activity. Slows the rate of calcium-mediated inactivation of CACNA1C calcium channel activity. The chain is SH3 and cysteine-rich domain-containing protein from Mus musculus (Mouse).